The primary structure comprises 279 residues: Thymidylate synthase (279 aa).

132–133 is a dUMP binding site; sequence RR. Cys-153 acts as the Nucleophile in catalysis. DUMP-binding positions include 178–181, Asn-189, and 219–221; these read RSND and HIY. (6R)-5,10-methylene-5,6,7,8-tetrahydrofolate is bound at residue Asp-181. A (6R)-5,10-methylene-5,6,7,8-tetrahydrofolate-binding site is contributed by Ala-278.

It belongs to the thymidylate synthase family. Bacterial-type ThyA subfamily. As to quaternary structure, homodimer.

The protein resides in the cytoplasm. It catalyses the reaction dUMP + (6R)-5,10-methylene-5,6,7,8-tetrahydrofolate = 7,8-dihydrofolate + dTMP. It participates in pyrimidine metabolism; dTTP biosynthesis. Functionally, catalyzes the reductive methylation of 2'-deoxyuridine-5'-monophosphate (dUMP) to 2'-deoxythymidine-5'-monophosphate (dTMP) while utilizing 5,10-methylenetetrahydrofolate (mTHF) as the methyl donor and reductant in the reaction, yielding dihydrofolate (DHF) as a by-product. This enzymatic reaction provides an intracellular de novo source of dTMP, an essential precursor for DNA biosynthesis. This is Thymidylate synthase from Lactococcus lactis subsp. cremoris (strain SK11).